A 355-amino-acid chain; its full sequence is UDP-N-acetylglucosamine--N-acetylmuramyl-(pentapeptide) pyrophosphoryl-undecaprenol N-acetylglucosamine transferase (355 aa).

Residues threonine 15–glycine 17, asparagine 127, arginine 163, serine 191, isoleucine 244, alanine 263–glutamate 268, and glutamine 288 each bind UDP-N-acetyl-alpha-D-glucosamine.

This sequence belongs to the glycosyltransferase 28 family. MurG subfamily.

Its subcellular location is the cell inner membrane. The catalysed reaction is di-trans,octa-cis-undecaprenyl diphospho-N-acetyl-alpha-D-muramoyl-L-alanyl-D-glutamyl-meso-2,6-diaminopimeloyl-D-alanyl-D-alanine + UDP-N-acetyl-alpha-D-glucosamine = di-trans,octa-cis-undecaprenyl diphospho-[N-acetyl-alpha-D-glucosaminyl-(1-&gt;4)]-N-acetyl-alpha-D-muramoyl-L-alanyl-D-glutamyl-meso-2,6-diaminopimeloyl-D-alanyl-D-alanine + UDP + H(+). The protein operates within cell wall biogenesis; peptidoglycan biosynthesis. Functionally, cell wall formation. Catalyzes the transfer of a GlcNAc subunit on undecaprenyl-pyrophosphoryl-MurNAc-pentapeptide (lipid intermediate I) to form undecaprenyl-pyrophosphoryl-MurNAc-(pentapeptide)GlcNAc (lipid intermediate II). The protein is UDP-N-acetylglucosamine--N-acetylmuramyl-(pentapeptide) pyrophosphoryl-undecaprenol N-acetylglucosamine transferase of Escherichia coli (strain K12 / MC4100 / BW2952).